The primary structure comprises 384 residues: F-box A protein 224 (384 aa).

One can recognise an F-box domain in the interval 71–122 (PKSLSDFPIGVMYDVLGHVDPFERLVLRKVSRNLRDVVQKMRCELDALYVNK).

Belongs to the FTH family.

The protein is F-box A protein 224 (fbxa-224) of Caenorhabditis elegans.